The chain runs to 235 residues: MLTYDQWEKAEKPSFPSDNETKGALDVLAWAYREYGDEIVYACSFGIEGIVLIDLISQVKPDAEIVFLDTGLHFPETYDTIAKVKEKYPSLRIVMKQPRLTLEEQKAQFGDELWKRDPNKCCELRKVIPLREVLTGVTAWISGLRREQSPTRRHVEYINKDDKFRSIKVCPLIHWTWKDVWNYVYKRHLPYNVLHDRGYPSIGCAPCTAPATDPNDLRSGRWAGQGKTECGLHLA.

[4Fe-4S] cluster is bound by residues cysteine 121, cysteine 122, cysteine 204, and cysteine 207. The Nucleophile; cysteine thiosulfonate intermediate role is filled by cysteine 230.

Belongs to the PAPS reductase family. CysH subfamily. [4Fe-4S] cluster serves as cofactor.

It is found in the cytoplasm. It catalyses the reaction [thioredoxin]-disulfide + sulfite + AMP + 2 H(+) = adenosine 5'-phosphosulfate + [thioredoxin]-dithiol. It participates in sulfur metabolism; hydrogen sulfide biosynthesis; sulfite from sulfate. Functionally, catalyzes the formation of sulfite from adenosine 5'-phosphosulfate (APS) using thioredoxin as an electron donor. The chain is Adenosine 5'-phosphosulfate reductase from Geobacillus kaustophilus (strain HTA426).